We begin with the raw amino-acid sequence, 390 residues long: DNA polymerase IV (390 aa).

The UmuC domain occupies 6-187 (VMHVDLDAFF…LDIAVMPGIG (182 aa)). Mg(2+) contacts are provided by Asp-10 and Asp-105. Residue Glu-106 is part of the active site.

It belongs to the DNA polymerase type-Y family. As to quaternary structure, monomer. Mg(2+) serves as cofactor.

It is found in the cytoplasm. The enzyme catalyses DNA(n) + a 2'-deoxyribonucleoside 5'-triphosphate = DNA(n+1) + diphosphate. Poorly processive, error-prone DNA polymerase involved in untargeted mutagenesis. Copies undamaged DNA at stalled replication forks, which arise in vivo from mismatched or misaligned primer ends. These misaligned primers can be extended by PolIV. Exhibits no 3'-5' exonuclease (proofreading) activity. May be involved in translesional synthesis, in conjunction with the beta clamp from PolIII. This Dehalococcoides mccartyi (strain ATCC BAA-2100 / JCM 16839 / KCTC 5957 / BAV1) protein is DNA polymerase IV.